The primary structure comprises 249 residues: DNA repair protein RecO (249 aa).

It belongs to the RecO family.

Its function is as follows. Involved in DNA repair and RecF pathway recombination. The polypeptide is DNA repair protein RecO (Exiguobacterium sibiricum (strain DSM 17290 / CCUG 55495 / CIP 109462 / JCM 13490 / 255-15)).